Consider the following 302-residue polypeptide: 4-hydroxy-tetrahydrodipicolinate synthase (302 aa).

Residue Thr55 participates in pyruvate binding. The active-site Proton donor/acceptor is Tyr144. Catalysis depends on Lys172, which acts as the Schiff-base intermediate with substrate. Residue Val214 coordinates pyruvate.

Belongs to the DapA family. As to quaternary structure, homotetramer; dimer of dimers.

The protein resides in the cytoplasm. The catalysed reaction is L-aspartate 4-semialdehyde + pyruvate = (2S,4S)-4-hydroxy-2,3,4,5-tetrahydrodipicolinate + H2O + H(+). It functions in the pathway amino-acid biosynthesis; L-lysine biosynthesis via DAP pathway; (S)-tetrahydrodipicolinate from L-aspartate: step 3/4. Its function is as follows. Catalyzes the condensation of (S)-aspartate-beta-semialdehyde [(S)-ASA] and pyruvate to 4-hydroxy-tetrahydrodipicolinate (HTPA). This Prochlorococcus marinus (strain MIT 9313) protein is 4-hydroxy-tetrahydrodipicolinate synthase.